A 201-amino-acid chain; its full sequence is Reticulon-like protein B10 (201 aa).

Positions 14-201 (VADLIMWKNR…KPTNKIKKMQ (188 aa)) constitute a Reticulon domain. 3 helical membrane passes run 25-45 (GGFL…KCGY), 46-66 (SFFP…FLWA), and 135-155 (FLNF…IPFL).

The protein localises to the endoplasmic reticulum membrane. In Arabidopsis thaliana (Mouse-ear cress), this protein is Reticulon-like protein B10 (RTNLB10).